We begin with the raw amino-acid sequence, 484 residues long: Cobyric acid synthase (484 aa).

In terms of domain architecture, GATase cobBQ-type spans 251 to 438 (ALKIAVPVLP…LHGLFGSDAY (188 aa)). Cys-333 functions as the Nucleophile in the catalytic mechanism. The active site involves His-430.

The protein belongs to the CobB/CobQ family. CobQ subfamily.

It participates in cofactor biosynthesis; adenosylcobalamin biosynthesis. Functionally, catalyzes amidations at positions B, D, E, and G on adenosylcobyrinic A,C-diamide. NH(2) groups are provided by glutamine, and one molecule of ATP is hydrogenolyzed for each amidation. The protein is Cobyric acid synthase of Rhizobium leguminosarum bv. trifolii (strain WSM2304).